Here is a 432-residue protein sequence, read N- to C-terminus: Homogentisate 1,2-dioxygenase (432 aa).

Catalysis depends on H287, which acts as the Proton acceptor. Positions 330 and 336 each coordinate Fe cation. Positions 345 and 366 each coordinate homogentisate. H366 is a Fe cation binding site.

This sequence belongs to the homogentisate dioxygenase family. As to quaternary structure, hexamer; dimer of trimers. Fe cation is required as a cofactor.

It catalyses the reaction homogentisate + O2 = 4-maleylacetoacetate + H(+). Its pathway is amino-acid degradation; L-phenylalanine degradation; acetoacetate and fumarate from L-phenylalanine: step 4/6. In terms of biological role, involved in the catabolism of homogentisate (2,5-dihydroxyphenylacetate or 2,5-OH-PhAc), a central intermediate in the degradation of phenylalanine and tyrosine. Catalyzes the oxidative ring cleavage of the aromatic ring of homogentisate to yield maleylacetoacetate. This Pseudomonas aeruginosa (strain UCBPP-PA14) protein is Homogentisate 1,2-dioxygenase.